The sequence spans 70 residues: Protein SlyX homolog (70 aa).

Belongs to the SlyX family.

In Shewanella woodyi (strain ATCC 51908 / MS32), this protein is Protein SlyX homolog.